Here is a 165-residue protein sequence, read N- to C-terminus: NADH-quinone oxidoreductase subunit I (165 aa).

2 consecutive 4Fe-4S ferredoxin-type domains span residues 57–86 (RRYENGEERCIACKLCEAVCPALAITIESE) and 96–125 (TRYDIDLTKCIFCGFCEESCPVDSIVETHI). Positions 66, 69, 72, 76, 105, 108, 111, and 115 each coordinate [4Fe-4S] cluster.

Belongs to the complex I 23 kDa subunit family. NDH-1 is composed of 14 different subunits. Subunits NuoA, H, J, K, L, M, N constitute the membrane sector of the complex. The cofactor is [4Fe-4S] cluster.

It localises to the cell inner membrane. It carries out the reaction a quinone + NADH + 5 H(+)(in) = a quinol + NAD(+) + 4 H(+)(out). In terms of biological role, NDH-1 shuttles electrons from NADH, via FMN and iron-sulfur (Fe-S) centers, to quinones in the respiratory chain. The immediate electron acceptor for the enzyme in this species is believed to be ubiquinone. Couples the redox reaction to proton translocation (for every two electrons transferred, four hydrogen ions are translocated across the cytoplasmic membrane), and thus conserves the redox energy in a proton gradient. The chain is NADH-quinone oxidoreductase subunit I from Methylibium petroleiphilum (strain ATCC BAA-1232 / LMG 22953 / PM1).